A 344-amino-acid chain; its full sequence is Heat-inducible transcription repressor HrcA (344 aa).

It belongs to the HrcA family.

Negative regulator of class I heat shock genes (grpE-dnaK-dnaJ and groELS operons). Prevents heat-shock induction of these operons. This Desulforudis audaxviator (strain MP104C) protein is Heat-inducible transcription repressor HrcA.